The following is a 1038-amino-acid chain: Dorsal-ventral patterning protein Sog (1038 aa).

At 1–53 (MANKLRKSNAIEWATATGTVPLLERSCCHSEDAALEPQASKTSHREQAPILRH) the chain is on the cytoplasmic side. The helical; Signal-anchor for type II membrane protein transmembrane segment at 54-74 (LSQLSHLLIIAGLLIVCLAGV) threads the bilayer. The Extracellular portion of the chain corresponds to 75 to 1038 (TEGRRHAPLM…QPHHQQRSSS (964 aa)). The 76-residue stretch at 100–175 (TECQFGKVLR…LPGKCCKTCP (76 aa)) folds into the VWFC 1 domain. Asn-179 and Asn-287 each carry an N-linked (GlcNAc...) asparagine glycan. 4 consecutive CHRD domains span residues 197–337 (NMKH…KYTA), 339–471 (QTEL…TRAS), 474–588 (IFQT…PRPV), and 592–713 (RDSA…STKV). N-linked (GlcNAc...) asparagine glycans are attached at residues Asn-520, Asn-666, Asn-752, and Asn-821. The 63-residue stretch at 742–804 (TKCFHSGRFY…RDGECCPSCV (63 aa)) folds into the VWFC 2 domain. VWFC domains are found at residues 830 to 899 (RGCR…KICP) and 939 to 1020 (GGCK…TQCR).

The protein belongs to the chordin family. In terms of assembly, component of a complex composed of dpp, sog and tsg. Interacts with palmitoyltransferase Hip14. Post-translationally, palmitoylated, probably by Hip14. In terms of processing, cleaved by metalloproteases tok and tld. Cleavage by tok during pupal development contributes to specification of the posterior crossvein in the wing. In terms of tissue distribution, abuts the dorsal dpp-expressing cells in a lateral stripe 14-16 cells wide. Later in embryogenesis it is expressed in neuroectoderm and in the endoderm spaced along the anterior-posterior axis of the developing gut.

It localises to the golgi apparatus membrane. It is found in the cell membrane. Its subcellular location is the secreted. Putative negative growth factor. Antagonist of dpp, a protein involved in patterning the dorsal region and in the development of the neuroectoderm; dpp inhibition is enhanced by tsg. Required for establishment of a narrow stripe of peak levels of BMP signaling in the dorsal midline of early embryos, that will give rise to the amnioserosa. During pupal development, plays a role in specification of the posterior crossvein in the wing. Exhibits both agonist and antagonist activities towards BMP signaling during pupal wing patterning. The chain is Dorsal-ventral patterning protein Sog (sog) from Drosophila melanogaster (Fruit fly).